Consider the following 179-residue polypeptide: MSRIGKQPVPVPAGVDVTIDGQKVSVKGPKGTLDLTVAEPITVSRNDDGAIVVTRPNDERRNRSLHGLSRTLVSNLVTGVTQGYTTKMEIFGVGYRVQLKGSNLEFALGYSHPVVIEAPEGITFAVQSPTKFSISGIDKQKVGQISANIRRLRRPDPYKGKGVRYEGEQIRRKVGKTGK.

Belongs to the universal ribosomal protein uL6 family. Part of the 50S ribosomal subunit.

Functionally, this protein binds to the 23S rRNA, and is important in its secondary structure. It is located near the subunit interface in the base of the L7/L12 stalk, and near the tRNA binding site of the peptidyltransferase center. This Mycobacterium avium (strain 104) protein is Large ribosomal subunit protein uL6.